Here is a 141-residue protein sequence, read N- to C-terminus: HTH-type transcriptional repressor NsrR (141 aa).

The HTH rrf2-type domain occupies 2 to 129 (QLTSFTDYGL…DQYTLADMVK (128 aa)). Residues 28 to 51 (ISEVTEVYGVSRNHMVKIINQLSR) constitute a DNA-binding region (H-T-H motif). [2Fe-2S] cluster-binding residues include cysteine 91, cysteine 96, and cysteine 102.

Requires [2Fe-2S] cluster as cofactor.

Its function is as follows. Nitric oxide-sensitive repressor of genes involved in protecting the cell against nitrosative stress. May require iron for activity. The chain is HTH-type transcriptional repressor NsrR from Pectobacterium atrosepticum (strain SCRI 1043 / ATCC BAA-672) (Erwinia carotovora subsp. atroseptica).